Consider the following 180-residue polypeptide: Ribosome rescue factor SmrB (180 aa).

One can recognise a Smr domain in the interval 98–173 (LDLHGLTQLQ…GNAALLVLVA (76 aa)).

The protein belongs to the SmrB family. Associates with collided ribosomes, but not with correctly translating polysomes.

In terms of biological role, acts as a ribosome collision sensor. Detects stalled/collided disomes (pairs of ribosomes where the leading ribosome is stalled and a second ribosome has collided with it) and endonucleolytically cleaves mRNA at the 5' boundary of the stalled ribosome. Stalled/collided disomes form a new interface (primarily via the 30S subunits) that binds SmrB. Cleaved mRNA becomes available for tmRNA ligation, leading to ribosomal subunit dissociation and rescue of stalled ribosomes. The chain is Ribosome rescue factor SmrB from Pectobacterium atrosepticum (strain SCRI 1043 / ATCC BAA-672) (Erwinia carotovora subsp. atroseptica).